Reading from the N-terminus, the 363-residue chain is tRNA/tmRNA (uracil-C(5))-methyltransferase (363 aa).

5 residues coordinate S-adenosyl-L-methionine: Gln-187, Tyr-215, Asn-220, Glu-236, and Asp-296. Cys-321 acts as the Nucleophile in catalysis. Catalysis depends on Glu-355, which acts as the Proton acceptor.

The protein belongs to the class I-like SAM-binding methyltransferase superfamily. RNA M5U methyltransferase family. TrmA subfamily.

It carries out the reaction uridine(54) in tRNA + S-adenosyl-L-methionine = 5-methyluridine(54) in tRNA + S-adenosyl-L-homocysteine + H(+). The enzyme catalyses uridine(341) in tmRNA + S-adenosyl-L-methionine = 5-methyluridine(341) in tmRNA + S-adenosyl-L-homocysteine + H(+). In terms of biological role, dual-specificity methyltransferase that catalyzes the formation of 5-methyluridine at position 54 (m5U54) in all tRNAs, and that of position 341 (m5U341) in tmRNA (transfer-mRNA). This chain is tRNA/tmRNA (uracil-C(5))-methyltransferase, found in Pseudomonas paraeruginosa (strain DSM 24068 / PA7) (Pseudomonas aeruginosa (strain PA7)).